The chain runs to 400 residues: Enoyl-[acyl-carrier-protein] reductase [NADH] (400 aa).

Residues 48–53, 74–75, 111–112, and 139–140 each bind NAD(+); these read GSSSGY, FE, DA, and LA. Tyrosine 225 is a substrate binding site. Tyrosine 235 (proton donor) is an active-site residue. NAD(+) is bound by residues lysine 244 and 273-275; that span reads VVT.

It belongs to the TER reductase family. As to quaternary structure, monomer.

It carries out the reaction a 2,3-saturated acyl-[ACP] + NAD(+) = a (2E)-enoyl-[ACP] + NADH + H(+). Its pathway is lipid metabolism; fatty acid biosynthesis. In terms of biological role, involved in the final reduction of the elongation cycle of fatty acid synthesis (FAS II). Catalyzes the reduction of a carbon-carbon double bond in an enoyl moiety that is covalently linked to an acyl carrier protein (ACP). This chain is Enoyl-[acyl-carrier-protein] reductase [NADH], found in Shewanella denitrificans (strain OS217 / ATCC BAA-1090 / DSM 15013).